Here is a 275-residue protein sequence, read N- to C-terminus: NH(3)-dependent NAD(+) synthetase (275 aa).

Position 46-53 (46-53 (GISGGQDS)) interacts with ATP. D52 contacts Mg(2+). Residue R140 coordinates deamido-NAD(+). Residue T160 coordinates ATP. Residue E165 coordinates Mg(2+). Deamido-NAD(+) is bound by residues K173 and D180. ATP-binding residues include K189 and T211. 260-261 (HK) contributes to the deamido-NAD(+) binding site.

The protein belongs to the NAD synthetase family. As to quaternary structure, homodimer.

The catalysed reaction is deamido-NAD(+) + NH4(+) + ATP = AMP + diphosphate + NAD(+) + H(+). Its pathway is cofactor biosynthesis; NAD(+) biosynthesis; NAD(+) from deamido-NAD(+) (ammonia route): step 1/1. Functionally, catalyzes the ATP-dependent amidation of deamido-NAD to form NAD. Uses ammonia as a nitrogen source. The protein is NH(3)-dependent NAD(+) synthetase of Salmonella typhi.